A 349-amino-acid polypeptide reads, in one-letter code: Isopentenyl-diphosphate delta-isomerase (349 aa).

A substrate-binding site is contributed by 8–9 (RK). FMN contacts are provided by residues Ser-66, 67–69 (SMT), Ser-97, and Asn-125. 97–99 (STR) serves as a coordination point for substrate. Gln-160 is a substrate binding site. Glu-161 contacts Mg(2+). FMN is bound by residues Lys-192, Thr-222, 272-274 (GMK), and 293-294 (AR).

Belongs to the IPP isomerase type 2 family. As to quaternary structure, homooctamer. Dimer of tetramers. The cofactor is FMN. NADPH is required as a cofactor. Requires Mg(2+) as cofactor.

Its subcellular location is the cytoplasm. It carries out the reaction isopentenyl diphosphate = dimethylallyl diphosphate. Its function is as follows. Involved in the biosynthesis of isoprenoids. Catalyzes the 1,3-allylic rearrangement of the homoallylic substrate isopentenyl (IPP) to its allylic isomer, dimethylallyl diphosphate (DMAPP). This is Isopentenyl-diphosphate delta-isomerase from Oceanobacillus iheyensis (strain DSM 14371 / CIP 107618 / JCM 11309 / KCTC 3954 / HTE831).